The following is a 275-amino-acid chain: Undecaprenyl-diphosphatase (275 aa).

Helical transmembrane passes span 2–22, 43–63, 83–103, 111–131, 147–167, 186–206, 221–241, and 255–275; these read LDIF…FLPI, FTDM…VVLY, WVLW…GLPL, LMNW…FIVI, TLPY…LIPG, YVAT…ASLL, LQGA…YLSI, and AFGW…TLIH.

The protein belongs to the UppP family.

The protein resides in the cell membrane. The enzyme catalyses di-trans,octa-cis-undecaprenyl diphosphate + H2O = di-trans,octa-cis-undecaprenyl phosphate + phosphate + H(+). Catalyzes the dephosphorylation of undecaprenyl diphosphate (UPP). Confers resistance to bacitracin. This Lactiplantibacillus plantarum (strain ATCC BAA-793 / NCIMB 8826 / WCFS1) (Lactobacillus plantarum) protein is Undecaprenyl-diphosphatase.